The primary structure comprises 470 residues: Pyruvate kinase I (470 aa).

Residue R32 participates in substrate binding. K(+) is bound by residues N34, S36, D66, and T67. 34 to 37 (NFSH) is a binding site for ATP. Positions 73 and 156 each coordinate ATP. Residue K220 participates in substrate binding. E222 provides a ligand contact to Mg(2+). The substrate site is built by G245, D246, and T278. D246 is a binding site for Mg(2+).

It belongs to the pyruvate kinase family. As to quaternary structure, homotetramer. Mg(2+) serves as cofactor. Requires K(+) as cofactor.

It catalyses the reaction pyruvate + ATP = phosphoenolpyruvate + ADP + H(+). It participates in carbohydrate degradation; glycolysis; pyruvate from D-glyceraldehyde 3-phosphate: step 5/5. Its activity is regulated as follows. Belongs to type I PK; fructose 1,6-bisphosphate-activated. In terms of biological role, catalyzes the formation of pyruvate in the last step of glycolysis, it is irreversible under physiological conditions. The reaction is critical for the control of metabolic flux in the second part of glycolysis. This Salmonella typhimurium (strain LT2 / SGSC1412 / ATCC 700720) protein is Pyruvate kinase I (pykF).